The primary structure comprises 516 residues: Threonine synthase 2, chloroplastic (516 aa).

The transit peptide at 1–33 (MASFSLPHSATYFPSHSETSLKPHSAASFTVRC) directs the protein to the chloroplast. The span at 1–37 (MASFSLPHSATYFPSHSETSLKPHSAASFTVRCTSAS) shows a compositional bias: polar residues. A disordered region spans residues 1-55 (MASFSLPHSATYFPSHSETSLKPHSAASFTVRCTSASPAVPPQTPQKPRRSPDEN). S-adenosyl-L-methionine is bound by residues 133–135 (PYG), 156–158 (SAF), asparagine 163, leucine 164, lysine 172, and asparagine 178. At lysine 194 the chain carries N6-(pyridoxal phosphate)lysine. Pyridoxal 5'-phosphate is bound by residues 326 to 330 (GNLGN) and threonine 464.

This sequence belongs to the threonine synthase family. Homodimer. It depends on pyridoxal 5'-phosphate as a cofactor.

The protein resides in the plastid. It is found in the chloroplast. It catalyses the reaction O-phospho-L-homoserine + H2O = L-threonine + phosphate. It participates in amino-acid biosynthesis; L-threonine biosynthesis; L-threonine from L-aspartate: step 5/5. Its activity is regulated as follows. Allosterically activated by S-adenosyl-methionine (SAM). Catalyzes the gamma-elimination of phosphate from L-phosphohomoserine and the beta-addition of water to produce L-threonine. This chain is Threonine synthase 2, chloroplastic (TS2), found in Arabidopsis thaliana (Mouse-ear cress).